Reading from the N-terminus, the 146-residue chain is Catabolic 3-dehydroquinase (146 aa).

Tyr24 (proton acceptor) is an active-site residue. Positions 78, 84, and 91 each coordinate substrate. His104 (proton donor) is an active-site residue. Residues 105 to 106 (IT) and Arg115 contribute to the substrate site.

It belongs to the type-II 3-dehydroquinase family. Homododecamer. Adopts a ring-like structure, composed of an arrangement of two hexameric rings stacked on top of one another.

It catalyses the reaction 3-dehydroquinate = 3-dehydroshikimate + H2O. It functions in the pathway aromatic compound metabolism; 3,4-dihydroxybenzoate biosynthesis; 3,4-dihydroxybenzoate from 3-dehydroquinate: step 1/2. In terms of biological role, is involved in the catabolism of quinate. Allows the utilization of quinate as carbon source via the beta-ketoadipate pathway. This is Catabolic 3-dehydroquinase from Meyerozyma guilliermondii (strain ATCC 6260 / CBS 566 / DSM 6381 / JCM 1539 / NBRC 10279 / NRRL Y-324) (Yeast).